Consider the following 243-residue polypeptide: MKIDILTLFPEMFAPLEHSIVGKAKEKGLLDIHYHNFRDYAEKARHVDDEPYGGGQGMLLRAQPIFDTIEQIEAKKPRIILLDPAGKPFTQAYAEELALEEELIFICGHYEGYDERIKTLVTDEISLGDFVLTGGELAAMTMVDATVRLIPQVLGKESSHQDDSFSSGLLEYPQYTRPYDYRGMTVPDVLMSGHHERIRLWRLEESLRKTCLRRPDLLEHYNFSEEERKLLDKIKEALDQGED.

Residues Gly108 and 127-132 contribute to the S-adenosyl-L-methionine site; that span reads LGDFVL.

Belongs to the RNA methyltransferase TrmD family. In terms of assembly, homodimer.

It is found in the cytoplasm. The enzyme catalyses guanosine(37) in tRNA + S-adenosyl-L-methionine = N(1)-methylguanosine(37) in tRNA + S-adenosyl-L-homocysteine + H(+). Its function is as follows. Specifically methylates guanosine-37 in various tRNAs. This chain is tRNA (guanine-N(1)-)-methyltransferase, found in Streptococcus pyogenes serotype M2 (strain MGAS10270).